The sequence spans 138 residues: Large ribosomal subunit protein uL16 (138 aa).

Positions 1 to 15 are enriched in basic residues; the sequence is MLSPKKVKYRKKQRG. Positions 1–21 are disordered; sequence MLSPKKVKYRKKQRGRLSGEA.

Belongs to the universal ribosomal protein uL16 family. Part of the 50S ribosomal subunit.

In terms of biological role, binds 23S rRNA and is also seen to make contacts with the A and possibly P site tRNAs. The protein is Large ribosomal subunit protein uL16 of Borreliella afzelii (strain PKo) (Borrelia afzelii).